Consider the following 297-residue polypeptide: Tyrosine recombinase XerD (297 aa).

Residues 1-86 form the Core-binding (CB) domain; it reads MNDLIEDFLH…SLRSFFHYLM (86 aa). The Tyr recombinase domain maps to 107 to 291; it reads GLPKVLNLDD…TKLRLKDVYK (185 aa). Catalysis depends on residues arginine 147, lysine 171, histidine 243, arginine 246, and histidine 269. Tyrosine 278 functions as the O-(3'-phospho-DNA)-tyrosine intermediate in the catalytic mechanism.

The protein belongs to the 'phage' integrase family. XerD subfamily. As to quaternary structure, forms a cyclic heterotetrameric complex composed of two molecules of XerC and two molecules of XerD.

The protein localises to the cytoplasm. Its function is as follows. Site-specific tyrosine recombinase, which acts by catalyzing the cutting and rejoining of the recombining DNA molecules. The XerC-XerD complex is essential to convert dimers of the bacterial chromosome into monomers to permit their segregation at cell division. It also contributes to the segregational stability of plasmids. This Listeria monocytogenes serotype 4b (strain F2365) protein is Tyrosine recombinase XerD.